Reading from the N-terminus, the 393-residue chain is MAEEFKATASICGGGGGAWWNSPRSVMSPSDHFLSPCFGAAITSNDFSSQENHLKSRMTCTDNNNIVFGQREADSDSGGSTVTMDSTLQMMGLGFSSNCSSDWNQTILQEDLNSSFIRSSQDQDHGQGFLSTTTSPYILNPACSSSPSTSSSSSLIRTFYDPEPSPYNFVSTTSGSINDPQLSWANKTNPHHQVAYGLINSFSNNANSRPFWNSSSTTNLNNTTPSNFVTTPQIISTRLEDKTKNLKTRAQSESLKRAKDNESAAKKPRVTTPSPLPTFKVRKENLRDQITSLQQLVSPFGKTDTASVLQEAIEYIKFLHDQVTVLSTPYMKQGASNQQQQQISGKSKSQDENENHELRGHGLCLVPISSTFPVANETTADFWTPTFGGNNFR.

2 disordered regions span residues 248–277 and 332–356; these read TRAQSESLKRAKDNESAAKKPRVTTPSPLP and KQGASNQQQQQISGKSKSQDENENH. The span at 254–265 shows a compositional bias: basic and acidic residues; it reads SLKRAKDNESAA. The bHLH domain occupies 270–319; the sequence is VTTPSPLPTFKVRKENLRDQITSLQQLVSPFGKTDTASVLQEAIEYIKFL. The span at 332 to 347 shows a compositional bias: low complexity; sequence KQGASNQQQQQISGKS.

Homodimer.

The protein resides in the nucleus. The sequence is that of Transcription factor bHLH112 (BHLH112) from Arabidopsis thaliana (Mouse-ear cress).